Here is a 231-residue protein sequence, read N- to C-terminus: Extracellular deoxyribonuclease (231 aa).

A signal peptide spans methionine 1–alanine 20.

Belongs to the EndA/NucM nuclease family.

The protein localises to the secreted. The protein is Extracellular deoxyribonuclease (dns) of Vibrio cholerae serotype O1 (strain ATCC 39315 / El Tor Inaba N16961).